The following is a 1905-amino-acid chain: MEMEANDHFNFTGLPPAPAASGLKPSPSSGEGLYTNGSPMNFPQQGKSLNGDVNVNGLSTVSHTTTSGILNSAPHSSSTSHLHHPSVAYDCLWNYSQYPSANPGSNLKDPPLLSQFSGGQYPLNGILGGSRQPSSPSHNTNLRAGSQEFWANGTQSPMGLNFDSQELYDSFPDQNFEVMPNGPPSFFTSPQTSPMLGSSIQTFAPSQEVGSGIHPDEAAEKEMTSVVAENGTGLVGSLELEEEQPELKMCGYNGSVPSVESLHQEVSVLVPDPTVSCLDDPSHLPDQLEDTPILSEDSLEPFNSLAPEPVSGGLYGIDDTELMGAEDKLPLEDSPVISALDCPSLNNATAFSLLADDSQTSTSIFASPTSPPVLGESVLQDNSFDLNNGSDAEQEEMETQSSDFPPSLTQPAPDQSSTIQLHPATSPAVSPTTSPAVSLVVSPAASPEISPEVCPAASTVVSPAVFSVVSPASSAVLPAVSLEVPLTASVTSPKASPVTSPAAAFPTASPANKDVSSFLETTADVEEITGEGLTASGSGDVMRRRIATPEEVRLPLQHGWRREVRIKKGSHRWQGETWYYGPCGKRMKQFPEVIKYLSRNVVHSVRREHFSFSPRMPVGDFFEERDTPEGLQWVQLSAEEIPSRIQAITGKRGRPRNTEKAKTKEVPKVKRGRGRPPKVKITELLNKTDNRPLKKLEAQETLNEEDKAKIAKSKKKMRQKVQRGECQTTIQGQARNKRKQETKSLKQKEAKKKSKAEKEKGKTKQEKLKEKVKREKKEKVKMKEKEEVTKAKPACKADKTLATQRRLEERQRQQMILEEMKKPTEDMCLTDHQPLPDFSRVPGLTLPSGAFSDCLTIVEFLHSFGKVLGFDPAKDVPSLGVLQEGLLCQGDSLGEVQDLLVRLLKAALHDPGFPSYCQSLKILGEKVSEIPLTRDNVSEILRCFLMAYGVEPALCDRLRTQPFQAQPPQQKAAVLAFLVHELNGSTLIINEIDKTLESMSSYRKNKWIVEGRLRRLKTVLAKRTGRSEVEMEGPEECLGRRRSSRIMEETSGMEEEEEEESIAAVPGRRGRRDGEVDATASSIPELERQIEKLSKRQLFFRKKLLHSSQMLRAVSLGQDRYRRRYWVLPYLAGIFVEGTEGNLVPEEVIKKETDSLKVAAHASLNPALFSMKMELAGSNTTASSPARARGRPRKTKPGSMQPRHLKSPVRGQDSEQPQAQLQPEAQLHAPAQPQPQLQLQLQSHKGFLEQEGSPLSLGQSQHDLSQSAFLSWLSQTQSHSSLLSSSVLTPDSSPGKLDPAPSQPPEEPEPDEAESSPDPQALWFNISAQMPCNAAPTPPPAVSEDQPTPSPQQLASSKPMNRPSAANPCSPVQFSSTPLAGLAPKRRAGDPGEMPQSPTGLGQPKRRGRPPSKFFKQMEQRYLTQLTAQPVPPEMCSGWWWIRDPEMLDAMLKALHPRGIREKALHKHLNKHRDFLQEVCLRPSADPIFEPRQLPAFQEGIMSWSPKEKTYETDLAVLQWVEELEQRVIMSDLQIRGWTCPSPDSTREDLAYCEHLSDSQEDITWRGRGREGLAPQRKTTNPLDLAVMRLAALEQNVERRYLREPLWPTHEVVLEKALLSTPNGAPEGTTTEISYEITPRIRVWRQTLERCRSAAQVCLCLGQLERSIAWEKSVNKVTCLVCRKGDNDEFLLLCDGCDRGCHIYCHRPKMEAVPEGDWFCTVCLAQQVEGEFTQKPGFPKRGQKRKSGYSLNFSEGDGRRRRVLLRGRESPAAGPRYSEEGLSPSKRRRLSMRNHHSDLTFCEIILMEMESHDAAWPFLEPVNPRLVSGYRRIIKNPMDFSTMRERLLRGGYTSSEEFAADALLVFDNCQTFNEDDSEVGKAGHIMRRFFESRWEEFYQGKQANL.

Disordered stretches follow at residues 1–59 (MEME…NGLS) and 362–434 (TSIF…PTTS). Composition is skewed to polar residues over residues 35-59 (TNGS…NGLS), 379-391 (LQDN…NGSD), and 399-420 (TQSS…STIQ). T507 is modified (phosphothreonine). S509 is modified (phosphoserine). The 72-residue stretch at 546 to 617 (IATPEEVRLP…EHFSFSPRMP (72 aa)) folds into the MBD domain. Residue T548 is modified to Phosphothreonine. S613 bears the Phosphoserine mark. The interval 648–792 (ITGKRGRPRN…KEKEEVTKAK (145 aa)) is disordered. DNA-binding regions (a.T hook) lie at residues 649-661 (TGKR…TEKA) and 670-682 (KRGR…VKIT). The segment covering 656–668 (RNTEKAKTKEVPK) has biased composition (basic and acidic residues). Positions 669–678 (VKRGRGRPPK) are enriched in basic residues. Residue K680 is modified to N6-acetyllysine; by KAT8. The span at 686–709 (NKTDNRPLKKLEAQETLNEEDKAK) shows a compositional bias: basic and acidic residues. The stretch at 693–792 (LKKLEAQETL…KEKEEVTKAK (100 aa)) forms a coiled coil. The span at 710–721 (IAKSKKKMRQKV) shows a compositional bias: basic residues. Polar residues predominate over residues 725–734 (ECQTTIQGQA). Composition is skewed to basic and acidic residues over residues 739–748 (KQETKSLKQK) and 756–792 (AEKE…TKAK). K799 is subject to N6-acetyllysine. The DDT domain occupies 848–913 (SGAFSDCLTI…LKAALHDPGF (66 aa)). A Glycyl lysine isopeptide (Lys-Gly) (interchain with G-Cter in SUMO2) cross-link involves residue K866. S1051 carries the post-translational modification Phosphoserine. Residues K1150 and K1172 each participate in a glycyl lysine isopeptide (Lys-Gly) (interchain with G-Cter in SUMO2) cross-link. Disordered stretches follow at residues 1178–1220 (SNTT…PQAQ), 1283–1318 (LSSS…SSPD), and 1330–1412 (MPCN…RPPS). A Phosphoserine modification is found at S1184. The segment at residues 1186 to 1198 (ARARGRPRKTKPG) is a DNA-binding region (a.T hook 3). A compositionally biased stretch (low complexity) spans 1283 to 1293 (LSSSVLTPDSS). Acidic residues predominate over residues 1306–1315 (EEPEPDEAES). Residues 1345–1359 (DQPTPSPQQLASSKP) show a composition bias toward polar residues. S1397 carries the phosphoserine modification. The a.T hook 4 DNA-binding region spans 1404–1416 (PKRRGRPPSKFFK). S1559 is modified (phosphoserine). Residues K1676 and K1709 each participate in a glycyl lysine isopeptide (Lys-Gly) (interchain with G-Cter in SUMO2) cross-link. A PHD-type zinc finger spans residues 1676–1726 (KVTCLVCRKGDNDEFLLLCDGCDRGCHIYCHRPKMEAVPEGDWFCTVCLAQ). Disordered regions lie at residues 1734-1755 (QKPG…NFSE) and 1769-1789 (ESPA…KRRR). Phosphoserine occurs at positions 1747, 1770, 1783, and 1785. Residues 1793–1897 (RNHHSDLTFC…RFFESRWEEF (105 aa)) enclose the Bromo domain.

Belongs to the WAL family. Component of the NoRC-1 ISWI chromatin remodeling complex at least composed of SMARCA1 and BAZ2A/TIP5, which regulates the spacing of histone octamers on the DNA template to facilitate access to DNA. Within the NoRC-1 ISWI chromatin remodeling complex interacts with SMARCA1; the interaction is direct. Component of the NoRC-5 ISWI chromatin remodeling complex (also called the NoRC nucleolar-remodeling complex), at least composed of SMARCA5/SNF2H and BAZ2A/TIP5, which regulates the spacing of histone octamers on the DNA template to facilitate access to DNA. Within the NoRC-5 ISWI chromatin remodeling complexes interacts with SMARCA5/SNF2H; the interaction is direct. Interacts with TTF1; the interaction is required for recruitment of the NoRC-5 ISWI chromatin remodeling complex to rDNA. Interacts with HDAC1. Interacts with SIN3A. Interacts with DNMT1 and DNM3B. Interacts with BEND3 and USP21. In terms of processing, acetylation at Lys-680 by KAT8/MOF promotes its dissociation from pRNA, affecting heterochromatin formation, nucleosome positioning and rDNA silencing. Deacetylation by SIRT1 in late S phase enhances pRNA-binding, allowing de novo DNA methylation and heterochromatin formation. Acetylation is high during S phase and declines to background levels in late S phase when the silent copies of rRNA genes are replicated. Post-translationally, ubiquitinated. Deubiquitinated by USP21 leading to its stabilization. Expressed at moderate levels in most tissues analyzed, including heart, brain, placenta, lung, skeletal muscle, kidney and pancreas.

It is found in the nucleus. Its subcellular location is the nucleolus. Functionally, regulatory subunit of the ATP-dependent NoRC-1 and NoRC-5 ISWI chromatin remodeling complexes, which form ordered nucleosome arrays on chromatin and facilitate access to DNA during DNA-templated processes such as DNA replication, transcription, and repair. Both complexes regulate the spacing of nucleosomes along the chromatin and have the ability to slide mononucleosomes to the center of a DNA template. Directly stimulates the ATPase activity of SMARCA5 in the NoRC-5 ISWI chromatin remodeling complex. The NoRC-1 ISWI chromatin remodeling complex has a lower ATP hydrolysis rate than the NoRC-5 ISWI chromatin remodeling complex. Within the NoRC-5 ISWI chromatin remodeling complex, mediates silencing of a fraction of rDNA by recruiting histone-modifying enzymes and DNA methyltransferases, leading to heterochromatin formation and transcriptional silencing. In the complex, it plays a central role by being recruited to rDNA and by targeting chromatin modifying enzymes such as HDAC1, leading to repress RNA polymerase I transcription. Recruited to rDNA via its interaction with TTF1 and its ability to recognize and bind histone H4 acetylated on 'Lys-16' (H4K16ac), leading to deacetylation of H4K5ac, H4K8ac, H4K12ac but not H4K16ac. Specifically binds pRNAs, 150-250 nucleotide RNAs that are complementary in sequence to the rDNA promoter; pRNA-binding is required for heterochromatin formation and rDNA silencing. The sequence is that of Bromodomain adjacent to zinc finger domain protein 2A (BAZ2A) from Homo sapiens (Human).